The following is a 328-amino-acid chain: tRNA uridine(34) hydroxylase (328 aa).

Residues 130–224 enclose the Rhodanese domain; it reads LDEDTVVLDT…YGKDPEVQGE (95 aa). The Cysteine persulfide intermediate role is filled by Cys-184.

Belongs to the TrhO family.

The enzyme catalyses uridine(34) in tRNA + AH2 + O2 = 5-hydroxyuridine(34) in tRNA + A + H2O. Its function is as follows. Catalyzes oxygen-dependent 5-hydroxyuridine (ho5U) modification at position 34 in tRNAs. The chain is tRNA uridine(34) hydroxylase from Streptococcus pyogenes serotype M3 (strain SSI-1).